The primary structure comprises 443 residues: Probable D-serine dehydratase (443 aa).

At lysine 116 the chain carries N6-(pyridoxal phosphate)lysine.

Belongs to the serine/threonine dehydratase family. DsdA subfamily. The cofactor is pyridoxal 5'-phosphate.

The catalysed reaction is D-serine = pyruvate + NH4(+). The polypeptide is Probable D-serine dehydratase (Bacillus cereus (strain AH187)).